A 444-amino-acid polypeptide reads, in one-letter code: Acyl-CoA 6-desaturase (444 aa).

At 1–131 the chain is on the cytoplasmic side; that stretch reads MGKGGNQGEG…DMNLFKTNHV (131 aa). One can recognise a Cytochrome b5 heme-binding domain in the interval 18 to 95; that stretch reads MPTFSWEEIQ…LKPLLIGELA (78 aa). A helical transmembrane segment spans residues 132–152; that stretch reads FFLLLLAHIIALESIAWFTVF. Over 153-157 the chain is Lumenal; it reads YFGNG. A helical transmembrane segment spans residues 158–178; the sequence is WIPTLITAFVLATSQAQAGWL. Topologically, residues 179 to 264 are cytoplasmic; the sequence is QHDYGHLSVY…KYLPYNHQHE (86 aa). A Histidine box-1 motif is present at residues 180-184; the sequence is HDYGH. Residues 217 to 221 carry the Histidine box-2 motif; sequence HFQHH. Residues 265–285 traverse the membrane as a helical segment; it reads YFFLIGPPLLIPMYFQYQIIM. The Lumenal portion of the chain corresponds to 286–305; the sequence is TMIVHKNWVDLAWAISYYIR. The helical transmembrane segment at 306–326 threads the bilayer; that stretch reads FFVTYIPFYGILGALLFLNFI. Residues 327–444 lie on the Cytoplasmic side of the membrane; that stretch reads RFLESHWFVW…KLWLDAYLHK (118 aa). The Histidine box-3 motif lies at 382–386; that stretch reads QIEHH.

Belongs to the fatty acid desaturase type 1 family.

The protein localises to the endoplasmic reticulum membrane. It carries out the reaction (9Z,12Z)-octadecadienoyl-CoA + 2 Fe(II)-[cytochrome b5] + O2 + 2 H(+) = (6Z,9Z,12Z)-octadecatrienoyl-CoA + 2 Fe(III)-[cytochrome b5] + 2 H2O. The catalysed reaction is (9Z,12Z,15Z)-octadecatrienoyl-CoA + 2 Fe(II)-[cytochrome b5] + O2 + 2 H(+) = (6Z,9Z,12Z,15Z)-octadecatetraenoyl-CoA + 2 Fe(III)-[cytochrome b5] + 2 H2O. It catalyses the reaction (9Z,12Z,15Z,18Z,21Z)-tetracosapentaenoyl-CoA + 2 Fe(II)-[cytochrome b5] + O2 + 2 H(+) = (6Z,9Z,12Z,15Z,18Z,21Z)-tetracosahexaenoyl-CoA + 2 Fe(III)-[cytochrome b5] + 2 H2O. The enzyme catalyses (11E)-octadecenoyl-CoA + 2 Fe(II)-[cytochrome b5] + O2 + 2 H(+) = (6Z,11E)-octadecadienoyl-CoA + 2 Fe(III)-[cytochrome b5] + 2 H2O. It carries out the reaction (11Z,14Z)-eicosadienoyl-CoA + 2 Fe(II)-[cytochrome b5] + O2 + 2 H(+) = (8Z,11Z,14Z)-eicosatrienoyl-CoA + 2 Fe(III)-[cytochrome b5] + 2 H2O. The catalysed reaction is (11Z,14Z,17Z)-eicosatrienoyl-CoA + 2 Fe(II)-[cytochrome b5] + O2 + 2 H(+) = (8Z,11Z,14Z,17Z)-eicosatetraenoyl-CoA + 2 Fe(III)-[cytochrome b5] + 2 H2O. Its pathway is lipid metabolism; polyunsaturated fatty acid biosynthesis. Involved in the biosynthesis of highly unsaturated fatty acids (HUFA) from the essential polyunsaturated fatty acids (PUFA) linoleic acid (LA) (18:2n-6) and alpha-linolenic acid (ALA) (18:3n-3) precursors, acting as a fatty acyl-coenzyme A (CoA) desaturase that introduces a cis double bond at carbon 6 of the fatty acyl chain. Catalyzes the first and rate limiting step in this pathway which is the desaturation of LA (18:2n-6) and ALA (18:3n-3) into gamma-linoleate (GLA) (18:3n-6) and stearidonate (18:4n-3), respectively. Subsequently, in the biosynthetic pathway of HUFA n-3 series, it desaturates tetracosapentaenoate (24:5n-3) to tetracosahexaenoate (24:6n-3), which is then converted to docosahexaenoate (DHA)(22:6n-3), an important lipid for nervous system function. It can also desaturate (11E)-octadecenoate (trans-vaccenoate) at carbon 6 generating (6Z,11E)-octadecadienoate. In addition to Delta-6 activity, this enzyme exhibits Delta-8 activity with slight biases toward n-3 fatty acyl-CoA substrates. This is Acyl-CoA 6-desaturase (FADS2) from Macaca fascicularis (Crab-eating macaque).